Reading from the N-terminus, the 692-residue chain is DNA repair protein RAD34 (692 aa).

Residues 1–38 (MAKRLLESSQNDQANRKNSKIEKKEVSFYEEEETDDSF) form a disordered region. A compositionally biased stretch (acidic residues) spans 28 to 38 (FYEEEETDDSF).

Belongs to the XPC family.

The protein localises to the nucleus. Functionally, involved in nucleotide excision repair (NER) of damaged ribosomal DNA (rDNA). Required for the repair of the RNA polymerase I-transcribed strand of rDNA. The chain is DNA repair protein RAD34 (RAD34) from Saccharomyces cerevisiae (strain ATCC 204508 / S288c) (Baker's yeast).